Here is a 190-residue protein sequence, read N- to C-terminus: Adenine phosphoribosyltransferase (190 aa).

The protein belongs to the purine/pyrimidine phosphoribosyltransferase family. In terms of assembly, homodimer.

The protein localises to the cytoplasm. It carries out the reaction AMP + diphosphate = 5-phospho-alpha-D-ribose 1-diphosphate + adenine. The protein operates within purine metabolism; AMP biosynthesis via salvage pathway; AMP from adenine: step 1/1. In terms of biological role, catalyzes a salvage reaction resulting in the formation of AMP, that is energically less costly than de novo synthesis. This chain is Adenine phosphoribosyltransferase, found in Cupriavidus metallidurans (strain ATCC 43123 / DSM 2839 / NBRC 102507 / CH34) (Ralstonia metallidurans).